The primary structure comprises 253 residues: Tetraspanin-11 (253 aa).

4 helical membrane-spanning segments follow: residues 19–39, 63–83, 93–113, and 220–240; these read LLFI…AVGI, VLIF…GAII, YFCL…LAHV, and LLLM…GMVL.

Belongs to the tetraspanin (TM4SF) family.

The protein localises to the membrane. The protein is Tetraspanin-11 (Tspan11) of Rattus norvegicus (Rat).